Here is a 397-residue protein sequence, read N- to C-terminus: 1-deoxy-D-xylulose 5-phosphate reductoisomerase (397 aa).

NADPH is bound by residues threonine 10, glycine 11, serine 12, isoleucine 13, asparagine 38, and asparagine 125. Lysine 126 serves as a coordination point for 1-deoxy-D-xylulose 5-phosphate. Glutamate 127 is an NADPH binding site. Aspartate 151 contacts Mn(2+). Residues serine 152, glutamate 153, serine 187, and histidine 210 each contribute to the 1-deoxy-D-xylulose 5-phosphate site. Glutamate 153 provides a ligand contact to Mn(2+). Residue glycine 216 participates in NADPH binding. 1-deoxy-D-xylulose 5-phosphate-binding residues include serine 223, asparagine 228, lysine 229, and glutamate 232. A Mn(2+)-binding site is contributed by glutamate 232.

Belongs to the DXR family. Homodimer. Mg(2+) is required as a cofactor. It depends on Mn(2+) as a cofactor.

It carries out the reaction 2-C-methyl-D-erythritol 4-phosphate + NADP(+) = 1-deoxy-D-xylulose 5-phosphate + NADPH + H(+). It participates in isoprenoid biosynthesis; isopentenyl diphosphate biosynthesis via DXP pathway; isopentenyl diphosphate from 1-deoxy-D-xylulose 5-phosphate: step 1/6. Functionally, catalyzes the NADPH-dependent rearrangement and reduction of 1-deoxy-D-xylulose-5-phosphate (DXP) to 2-C-methyl-D-erythritol 4-phosphate (MEP). The protein is 1-deoxy-D-xylulose 5-phosphate reductoisomerase of Blochmanniella pennsylvanica (strain BPEN).